The chain runs to 551 residues: Malate synthase, glyoxysomal (551 aa).

The active-site Proton acceptor is Arg174. Catalysis depends on Asp458, which acts as the Proton donor.

This sequence belongs to the malate synthase family.

It localises to the glyoxysome. It catalyses the reaction glyoxylate + acetyl-CoA + H2O = (S)-malate + CoA + H(+). It participates in carbohydrate metabolism; glyoxylate cycle; (S)-malate from isocitrate: step 2/2. The polypeptide is Malate synthase, glyoxysomal (PMS1) (Candida tropicalis (Yeast)).